Consider the following 130-residue polypeptide: Small ribosomal subunit protein uS9 (130 aa).

Belongs to the universal ribosomal protein uS9 family.

This Geotalea daltonii (strain DSM 22248 / JCM 15807 / FRC-32) (Geobacter daltonii) protein is Small ribosomal subunit protein uS9.